Reading from the N-terminus, the 130-residue chain is Cyclin-dependent kinase 4 inhibitor B (130 aa).

ANK repeat units follow at residues 5–34 (SSDA…DPNA), 38–66 (FGRR…EPNC), 71–100 (TLTR…RLDV), and 104–130 (WGRL…ATGD). Threonine 12 carries the post-translational modification Phosphothreonine.

It belongs to the CDKN2 cyclin-dependent kinase inhibitor family. As to quaternary structure, heterodimer of CDKN2B with CDK4 or CDK6. In terms of tissue distribution, expressed ubiquitously.

Functionally, interacts strongly with CDK4 and CDK6. Potent inhibitor. Potential effector of TGF-beta induced cell cycle arrest. This Mus musculus (Mouse) protein is Cyclin-dependent kinase 4 inhibitor B (Cdkn2b).